Consider the following 100-residue polypeptide: Protein RADIALIS-like 1 (100 aa).

The region spanning 9-64 (QSSGSWTAKQNKAFEQALATYDQDTPNRWQNVAKVVGGKTTEEVKRHYELLVQDIN) is the SANT domain. The disordered stretch occupies residues 73–100 (FPNYRTSGGCTNGRLSQEEKRMRNMRLQ). A compositionally biased stretch (polar residues) spans 76–87 (YRTSGGCTNGRL).

The protein resides in the nucleus. Functionally, probable transcription factor. This Arabidopsis thaliana (Mouse-ear cress) protein is Protein RADIALIS-like 1 (RL1).